The primary structure comprises 315 residues: Secreted frizzled-related protein 5 (315 aa).

Positions 1–27 (MRAAAGGARAAVLALLLGALHGAPARG) are cleaved as a signal peptide. The FZ domain occupies 46–163 (SKPPQCLDIP…PLDNDLCIAV (118 aa)). 8 disulfide bridges follow: Cys51–Cys114, Cys61–Cys107, Cys98–Cys133, Cys122–Cys160, Cys126–Cys150, Cys179–Cys251, Cys182–Cys253, and Cys196–Cys301. One can recognise an NTR domain in the interval 179-301 (CAQCEMEHSA…AVKFMFSYPC (123 aa)).

It belongs to the secreted frizzled-related protein (sFRP) family. As to expression, strongly expressed in the retinal pigment epithelium (RPE). Weak expression in retina, brain, heart, liver, kidney, testis and muscle.

The protein localises to the secreted. Its function is as follows. Soluble frizzled-related proteins (sFRPS) function as modulators of Wnt signaling through direct interaction with Wnts. They have a role in regulating cell growth and differentiation in specific cell types. SFRP5 may be involved in determining the polarity of photoreceptor, and perhaps other, cells in the retina. Inhibits Wnt8 signaling, in vitro. The polypeptide is Secreted frizzled-related protein 5 (SFRP5) (Bos taurus (Bovine)).